The sequence spans 264 residues: Thymidylate synthase (264 aa).

DUMP is bound at residue arginine 21. Histidine 51 is a binding site for (6R)-5,10-methylene-5,6,7,8-tetrahydrofolate. Position 126-127 (126-127 (RR)) interacts with dUMP. Cysteine 146 serves as the catalytic Nucleophile. Residues 166-169 (RSAD), asparagine 177, and 207-209 (HIY) each bind dUMP. Aspartate 169 contacts (6R)-5,10-methylene-5,6,7,8-tetrahydrofolate. Position 263 (alanine 263) interacts with (6R)-5,10-methylene-5,6,7,8-tetrahydrofolate.

Belongs to the thymidylate synthase family. Bacterial-type ThyA subfamily. Homodimer.

The protein localises to the cytoplasm. It catalyses the reaction dUMP + (6R)-5,10-methylene-5,6,7,8-tetrahydrofolate = 7,8-dihydrofolate + dTMP. It participates in pyrimidine metabolism; dTTP biosynthesis. Its function is as follows. Catalyzes the reductive methylation of 2'-deoxyuridine-5'-monophosphate (dUMP) to 2'-deoxythymidine-5'-monophosphate (dTMP) while utilizing 5,10-methylenetetrahydrofolate (mTHF) as the methyl donor and reductant in the reaction, yielding dihydrofolate (DHF) as a by-product. This enzymatic reaction provides an intracellular de novo source of dTMP, an essential precursor for DNA biosynthesis. This chain is Thymidylate synthase, found in Bacteroides fragilis (strain ATCC 25285 / DSM 2151 / CCUG 4856 / JCM 11019 / LMG 10263 / NCTC 9343 / Onslow / VPI 2553 / EN-2).